The primary structure comprises 204 residues: Large ribosomal subunit protein eL15 (204 aa).

It belongs to the eukaryotic ribosomal protein eL15 family. Component of the large ribosomal subunit.

It localises to the cytoplasm. Its function is as follows. Component of the large ribosomal subunit. The ribosome is a large ribonucleoprotein complex responsible for the synthesis of proteins in the cell. In Hypophthalmichthys nobilis (Bighead carp), this protein is Large ribosomal subunit protein eL15 (rpl15).